The following is a 335-amino-acid chain: tRNA N6-adenosine threonylcarbamoyltransferase (335 aa).

The Fe cation site is built by H111 and H115. Residues 133–137 (LISGG), D166, G179, and N276 contribute to the substrate site. D301 serves as a coordination point for Fe cation.

This sequence belongs to the KAE1 / TsaD family. Fe(2+) serves as cofactor.

It localises to the cytoplasm. The enzyme catalyses L-threonylcarbamoyladenylate + adenosine(37) in tRNA = N(6)-L-threonylcarbamoyladenosine(37) in tRNA + AMP + H(+). Its function is as follows. Required for the formation of a threonylcarbamoyl group on adenosine at position 37 (t(6)A37) in tRNAs that read codons beginning with adenine. Is involved in the transfer of the threonylcarbamoyl moiety of threonylcarbamoyl-AMP (TC-AMP) to the N6 group of A37, together with TsaE and TsaB. TsaD likely plays a direct catalytic role in this reaction. The chain is tRNA N6-adenosine threonylcarbamoyltransferase from Wolbachia sp. subsp. Brugia malayi (strain TRS).